A 162-amino-acid polypeptide reads, in one-letter code: NADH-quinone oxidoreductase subunit I (162 aa).

2 consecutive 4Fe-4S ferredoxin-type domains span residues 54–83 and 93–122; these read RRYE…INST and SSYE…ETNI. [4Fe-4S] cluster-binding residues include Cys63, Cys66, Cys69, Cys73, Cys102, Cys105, Cys108, and Cys112.

This sequence belongs to the complex I 23 kDa subunit family. In terms of assembly, NDH-1 is composed of 14 different subunits. Subunits NuoA, H, J, K, L, M, N constitute the membrane sector of the complex. [4Fe-4S] cluster serves as cofactor.

The protein localises to the cell inner membrane. It catalyses the reaction a quinone + NADH + 5 H(+)(in) = a quinol + NAD(+) + 4 H(+)(out). In terms of biological role, NDH-1 shuttles electrons from NADH, via FMN and iron-sulfur (Fe-S) centers, to quinones in the respiratory chain. The immediate electron acceptor for the enzyme in this species is believed to be ubiquinone. Couples the redox reaction to proton translocation (for every two electrons transferred, four hydrogen ions are translocated across the cytoplasmic membrane), and thus conserves the redox energy in a proton gradient. The sequence is that of NADH-quinone oxidoreductase subunit I from Francisella philomiragia subsp. philomiragia (strain ATCC 25017 / CCUG 19701 / FSC 153 / O#319-036).